Here is an 874-residue protein sequence, read N- to C-terminus: Alanine--tRNA ligase (874 aa).

Residues H564, H568, C665, and H669 each coordinate Zn(2+).

The protein belongs to the class-II aminoacyl-tRNA synthetase family. Zn(2+) is required as a cofactor.

Its subcellular location is the cytoplasm. The enzyme catalyses tRNA(Ala) + L-alanine + ATP = L-alanyl-tRNA(Ala) + AMP + diphosphate. Functionally, catalyzes the attachment of alanine to tRNA(Ala) in a two-step reaction: alanine is first activated by ATP to form Ala-AMP and then transferred to the acceptor end of tRNA(Ala). Also edits incorrectly charged Ser-tRNA(Ala) and Gly-tRNA(Ala) via its editing domain. The protein is Alanine--tRNA ligase of Burkholderia multivorans (strain ATCC 17616 / 249).